The chain runs to 285 residues: Bifunctional protein FolD (285 aa).

NADP(+)-binding positions include 166–168 (GAS) and I232.

Belongs to the tetrahydrofolate dehydrogenase/cyclohydrolase family. In terms of assembly, homodimer.

It catalyses the reaction (6R)-5,10-methylene-5,6,7,8-tetrahydrofolate + NADP(+) = (6R)-5,10-methenyltetrahydrofolate + NADPH. It carries out the reaction (6R)-5,10-methenyltetrahydrofolate + H2O = (6R)-10-formyltetrahydrofolate + H(+). It functions in the pathway one-carbon metabolism; tetrahydrofolate interconversion. Its function is as follows. Catalyzes the oxidation of 5,10-methylenetetrahydrofolate to 5,10-methenyltetrahydrofolate and then the hydrolysis of 5,10-methenyltetrahydrofolate to 10-formyltetrahydrofolate. This Actinobacillus succinogenes (strain ATCC 55618 / DSM 22257 / CCUG 43843 / 130Z) protein is Bifunctional protein FolD.